The chain runs to 544 residues: CTP synthase (544 aa).

Positions Met1–Ile266 are amidoligase domain. Position 13 (Ser13) interacts with CTP. Ser13 is a UTP binding site. Residues Ser14–Ile19 and Asp71 each bind ATP. Asp71 and Glu140 together coordinate Mg(2+). CTP contacts are provided by residues Asp147–Glu149, Lys187–Gln192, and Lys223. Residues Lys187–Gln192 and Lys223 each bind UTP. An ATP-binding site is contributed by Arg239 to Val241. The Glutamine amidotransferase type-1 domain occupies Thr292 to Leu543. Gly355 lines the L-glutamine pocket. Cys382 acts as the Nucleophile; for glutamine hydrolysis in catalysis. L-glutamine contacts are provided by residues Tyr383–Gln386, Glu406, and Arg471. Residues His516 and Glu518 contribute to the active site.

The protein belongs to the CTP synthase family. Homotetramer.

The enzyme catalyses UTP + L-glutamine + ATP + H2O = CTP + L-glutamate + ADP + phosphate + 2 H(+). It catalyses the reaction L-glutamine + H2O = L-glutamate + NH4(+). It carries out the reaction UTP + NH4(+) + ATP = CTP + ADP + phosphate + 2 H(+). It participates in pyrimidine metabolism; CTP biosynthesis via de novo pathway; CTP from UDP: step 2/2. With respect to regulation, allosterically activated by GTP, when glutamine is the substrate; GTP has no effect on the reaction when ammonia is the substrate. The allosteric effector GTP functions by stabilizing the protein conformation that binds the tetrahedral intermediate(s) formed during glutamine hydrolysis. Inhibited by the product CTP, via allosteric rather than competitive inhibition. Its function is as follows. Catalyzes the ATP-dependent amination of UTP to CTP with either L-glutamine or ammonia as the source of nitrogen. Regulates intracellular CTP levels through interactions with the four ribonucleotide triphosphates. In Hyphomonas neptunium (strain ATCC 15444), this protein is CTP synthase.